The sequence spans 895 residues: Isoleucine--tRNA ligase (895 aa).

The 'HIGH' region motif lies at 57–67 (PYANGSIHVGH). E549 provides a ligand contact to L-isoleucyl-5'-AMP. Residues 590-594 (KMSKS) carry the 'KMSKS' region motif. K593 is a binding site for ATP. Zn(2+) is bound by residues C869, C872, C888, and C891.

Belongs to the class-I aminoacyl-tRNA synthetase family. IleS type 1 subfamily. Monomer. Requires Zn(2+) as cofactor.

It is found in the cytoplasm. The catalysed reaction is tRNA(Ile) + L-isoleucine + ATP = L-isoleucyl-tRNA(Ile) + AMP + diphosphate. Functionally, catalyzes the attachment of isoleucine to tRNA(Ile). As IleRS can inadvertently accommodate and process structurally similar amino acids such as valine, to avoid such errors it has two additional distinct tRNA(Ile)-dependent editing activities. One activity is designated as 'pretransfer' editing and involves the hydrolysis of activated Val-AMP. The other activity is designated 'posttransfer' editing and involves deacylation of mischarged Val-tRNA(Ile). In Mycoplasma genitalium (strain ATCC 33530 / DSM 19775 / NCTC 10195 / G37) (Mycoplasmoides genitalium), this protein is Isoleucine--tRNA ligase.